Consider the following 248-residue polypeptide: MRLIQNMCTIAEYPAPGSAAAADCCLGAAGRRLVKIAVVGASGVGKTALVVRFLTKRFIGDYERNAGNLYTRQVQIEGETLAIQVQDTPGIQVHENGLSCTEQLNRCIRWADAVVIVFSITDYKSYELTSQLHQHVQQLHLGTRLPVVVVANKADLLHIKQVDPQLGLQLASMLGCSFYEVSVSENDNDVYNAFHVLCKEVSHKQQPSGTPEKRRTSLIPRPKSPNMQDLKRRFKQALSAKVRTVTSV.

Residues 29 to 246 (AGRRLVKIAV…ALSAKVRTVT (218 aa)) form a small GTPase-like region. GTP is bound by residues 40-47 (GASGVGKT), 87-91 (DTPGI), and 152-155 (NKAD). Residues 205 to 229 (QQPSGTPEKRRTSLIPRPKSPNMQD) form a disordered region.

This sequence belongs to the small GTPase superfamily. Ras family.

The catalysed reaction is GTP + H2O = GDP + phosphate + H(+). This is Ras-like protein family member 11B from Bos taurus (Bovine).